The sequence spans 274 residues: Transcription factor Ovo-like 2 (274 aa).

The segment covering 1-11 (MPKVFLVKRRS) has biased composition (basic residues). The segment at 1–88 (MPKVFLVKRR…ETPELHDAQG (88 aa)) is disordered. Positions 18–29 (SWDELPDDKRAD) are enriched in basic and acidic residues. Low complexity predominate over residues 50 to 74 (DGGSSSGCSSSAGEPGGAESSSSPR). C2H2-type zinc fingers lie at residues 118-140 (HNCD…LKCH), 146-168 (HLCT…VRTH), 174-197 (YKCE…KKIH), and 213-236 (YVCE…NSDH). Residue Ser-268 is modified to Phosphoserine.

It belongs to the krueppel C2H2-type zinc-finger protein family. Interacts (via zinc-finger domains) with CEBPA (via bZIP domain); the interaction inhibits the transcription factor activity of CEBPA and is required to repress adipogenesis. As to expression, expressed highly in testis, specifically in spermatocytes. Expressed also in skin and at lower levels in the ovary. Expressed in adipose tissues. Expression is lower than in testis and a relatively higher expression level is detected in the stromal vascular fraction (SVF) than in fat cells themselves.

It localises to the nucleus. Its function is as follows. Zinc-finger transcription repressor factor. Plays a critical role in maintaining the identity of epithelial lineages by suppressing epithelial-to mesenchymal transition (EMT) mainly through the repression of ZEB1, an EMT inducer. Positively regulates neuronal differentiation. Suppresses cell cycling and terminal differentiation of keratinocytes by directly repressing MYC and NOTCH1. Important for the correct development of primordial germ cells in embryos. Plays dual functions in thermogenesis and adipogenesis to maintain energy balance. Essential for brown/beige adipose tissue-mediated thermogenesis, is necessary for the development of brown adipocytes. In white adipose tissues, limits adipogenesis by blocking CEBPA binding to its transcriptional targets and inhibiting its transcription factor activity. The protein is Transcription factor Ovo-like 2 of Mus musculus (Mouse).